We begin with the raw amino-acid sequence, 276 residues long: Large ribosomal subunit protein uL2c (276 aa).

The interval 221–276 (RGSVMNPVDHPHGGGEGRAPIGRSRPVTPWGKPALGQKTRKPKKQSNKLILRKRKK) is disordered. The segment covering 258–276 (KTRKPKKQSNKLILRKRKK) has biased composition (basic residues).

This sequence belongs to the universal ribosomal protein uL2 family. As to quaternary structure, part of the 50S ribosomal subunit.

The protein resides in the plastid. The protein localises to the chloroplast. The protein is Large ribosomal subunit protein uL2c (rpl2) of Stigeoclonium helveticum (Green alga).